The following is a 102-amino-acid chain: MFDPSKLSEMLTQFQDKAKEMEEKSHNTSFTAKSGGGLVSVSMSGAGELLDVSIDDSLLEDKESLQILLISAINDVYKSVEENKKSMTLGMLGGMAPFPFGS.

Belongs to the YbaB/EbfC family. Homodimer.

The protein localises to the cytoplasm. Its subcellular location is the nucleoid. Functionally, binds to DNA and alters its conformation. May be involved in regulation of gene expression, nucleoid organization and DNA protection. The chain is Nucleoid-associated protein WS1681 from Wolinella succinogenes (strain ATCC 29543 / DSM 1740 / CCUG 13145 / JCM 31913 / LMG 7466 / NCTC 11488 / FDC 602W) (Vibrio succinogenes).